The sequence spans 417 residues: Phosphoribosylamine--glycine ligase (417 aa).

Positions 107-313 (KQIMAKYEIP…FLEIIEATLE (207 aa)) constitute an ATP-grasp domain. 133 to 194 (LKETWYPVVI…EEMLYGKEAS (62 aa)) is an ATP binding site. Glu283 and Asn285 together coordinate Mg(2+).

Belongs to the GARS family. The cofactor is Mg(2+). Mn(2+) serves as cofactor.

It carries out the reaction 5-phospho-beta-D-ribosylamine + glycine + ATP = N(1)-(5-phospho-beta-D-ribosyl)glycinamide + ADP + phosphate + H(+). It participates in purine metabolism; IMP biosynthesis via de novo pathway; N(1)-(5-phospho-D-ribosyl)glycinamide from 5-phospho-alpha-D-ribose 1-diphosphate: step 2/2. In Caldanaerobacter subterraneus subsp. tengcongensis (strain DSM 15242 / JCM 11007 / NBRC 100824 / MB4) (Thermoanaerobacter tengcongensis), this protein is Phosphoribosylamine--glycine ligase.